The chain runs to 238 residues: tRNA (guanine-N(7)-)-methyltransferase (238 aa).

S-adenosyl-L-methionine contacts are provided by E68, E93, D120, and D143. D143 is a catalytic residue. Substrate contacts are provided by residues K147, D179, and 216–219; that span reads TKFE.

It belongs to the class I-like SAM-binding methyltransferase superfamily. TrmB family.

It carries out the reaction guanosine(46) in tRNA + S-adenosyl-L-methionine = N(7)-methylguanosine(46) in tRNA + S-adenosyl-L-homocysteine. The protein operates within tRNA modification; N(7)-methylguanine-tRNA biosynthesis. Catalyzes the formation of N(7)-methylguanine at position 46 (m7G46) in tRNA. In Shewanella amazonensis (strain ATCC BAA-1098 / SB2B), this protein is tRNA (guanine-N(7)-)-methyltransferase.